The chain runs to 457 residues: Adenylosuccinate synthetase (457 aa).

Residues 45–51 and 73–75 contribute to the GTP site; these read GDEGKGK and GHT. The active-site Proton acceptor is the aspartate 46. Residues aspartate 46 and glycine 73 each coordinate Mg(2+). IMP-binding positions include 46 to 49, 71 to 74, threonine 163, arginine 177, asparagine 255, threonine 270, and arginine 334; these read DEGK and NAGH. Residue histidine 74 is the Proton donor of the active site. 330–336 serves as a coordination point for substrate; the sequence is VTTKRVR. Residues arginine 336, 362 to 364, and 444 to 446 contribute to the GTP site; these read KLD and GVG.

The protein belongs to the adenylosuccinate synthetase family. Homodimer. The cofactor is Mg(2+).

Its subcellular location is the cytoplasm. It carries out the reaction IMP + L-aspartate + GTP = N(6)-(1,2-dicarboxyethyl)-AMP + GDP + phosphate + 2 H(+). It functions in the pathway purine metabolism; AMP biosynthesis via de novo pathway; AMP from IMP: step 1/2. Its function is as follows. Plays an important role in the de novo pathway and in the salvage pathway of purine nucleotide biosynthesis. Catalyzes the first committed step in the biosynthesis of AMP from IMP. The chain is Adenylosuccinate synthetase from Aedes aegypti (Yellowfever mosquito).